We begin with the raw amino-acid sequence, 205 residues long: High frequency lysogenization protein HflD homolog (205 aa).

Belongs to the HflD family.

The protein resides in the cytoplasm. It is found in the cell inner membrane. The polypeptide is High frequency lysogenization protein HflD homolog (Shewanella sp. (strain MR-4)).